Reading from the N-terminus, the 134-residue chain is Large ribosomal subunit protein bL12 (134 aa).

Belongs to the bacterial ribosomal protein bL12 family. As to quaternary structure, homodimer. Part of the ribosomal stalk of the 50S ribosomal subunit. Forms a multimeric L10(L12)X complex, where L10 forms an elongated spine to which 2 to 4 L12 dimers bind in a sequential fashion. Binds GTP-bound translation factors.

Forms part of the ribosomal stalk which helps the ribosome interact with GTP-bound translation factors. Is thus essential for accurate translation. The protein is Large ribosomal subunit protein bL12 of Anaplasma phagocytophilum (strain HZ).